Here is a 534-residue protein sequence, read N- to C-terminus: uncharacterized protein (534 aa).

2 helical membrane-spanning segments follow: residues 149-169 (ILTTLVTVGTTLGTPIFSITI) and 185-205 (VFLVIFSVFAIALGLVSSLIF).

The protein resides in the cell membrane. This is an uncharacterized protein from Mycoplasma pneumoniae (strain ATCC 29342 / M129 / Subtype 1) (Mycoplasmoides pneumoniae).